The following is a 125-amino-acid chain: MNKQVRNTTEIVRLAKLKSQKTREKVDKAISKFCIEGFAINFNSIAKERNVSKSWLYKEHDIRQRIESLRERQITSNVVSKPKKSSRSEEILIKTLKRRVMELEKENKKLQNQIQKLYGDLYNKE.

This is Transposase C from transposon PsiTn554 (tnpC) from Staphylococcus aureus.